The chain runs to 120 residues: NAD(P)H-quinone oxidoreductase subunit 3 (120 aa).

3 helical membrane passes run 6-26 (GYDA…LALV), 64-84 (MFAL…PWAV), and 89-109 (LGLL…VALA).

It belongs to the complex I subunit 3 family. In terms of assembly, NDH-1 can be composed of about 15 different subunits; different subcomplexes with different compositions have been identified which probably have different functions.

It localises to the cellular thylakoid membrane. It catalyses the reaction a plastoquinone + NADH + (n+1) H(+)(in) = a plastoquinol + NAD(+) + n H(+)(out). The catalysed reaction is a plastoquinone + NADPH + (n+1) H(+)(in) = a plastoquinol + NADP(+) + n H(+)(out). In terms of biological role, NDH-1 shuttles electrons from an unknown electron donor, via FMN and iron-sulfur (Fe-S) centers, to quinones in the respiratory and/or the photosynthetic chain. The immediate electron acceptor for the enzyme in this species is believed to be plastoquinone. Couples the redox reaction to proton translocation, and thus conserves the redox energy in a proton gradient. Cyanobacterial NDH-1 also plays a role in inorganic carbon-concentration. This chain is NAD(P)H-quinone oxidoreductase subunit 3, found in Synechococcus sp. (strain CC9902).